A 390-amino-acid polypeptide reads, in one-letter code: Succinate--CoA ligase [ADP-forming] subunit beta (390 aa).

One can recognise an ATP-grasp domain in the interval 9–244 (KEIFRKYGVP…LDEEEPTEVE (236 aa)). ATP is bound by residues K46, 53-55 (GRG), E99, A102, and E107. Residues N199 and D213 each contribute to the Mg(2+) site. Residues N264 and 321–323 (GIV) contribute to the substrate site.

The protein belongs to the succinate/malate CoA ligase beta subunit family. As to quaternary structure, heterotetramer of two alpha and two beta subunits. Mg(2+) serves as cofactor.

It carries out the reaction succinate + ATP + CoA = succinyl-CoA + ADP + phosphate. The catalysed reaction is GTP + succinate + CoA = succinyl-CoA + GDP + phosphate. Its pathway is carbohydrate metabolism; tricarboxylic acid cycle; succinate from succinyl-CoA (ligase route): step 1/1. In terms of biological role, succinyl-CoA synthetase functions in the citric acid cycle (TCA), coupling the hydrolysis of succinyl-CoA to the synthesis of either ATP or GTP and thus represents the only step of substrate-level phosphorylation in the TCA. The beta subunit provides nucleotide specificity of the enzyme and binds the substrate succinate, while the binding sites for coenzyme A and phosphate are found in the alpha subunit. The sequence is that of Succinate--CoA ligase [ADP-forming] subunit beta from Nautilia profundicola (strain ATCC BAA-1463 / DSM 18972 / AmH).